Consider the following 135-residue polypeptide: MATFHFDLVSPEKLAFSGEVDQVDVPGIEGDFGVLANHAPVVAVIRPGILTVITGGNQQKIVVLGGIAEVSEKGLTVLADVATSVADLDAAMFAQTVSSMESALAGKQGSELDRAIERLDHYKNIQHQLTATAMH.

The protein belongs to the ATPase epsilon chain family. As to quaternary structure, F-type ATPases have 2 components, CF(1) - the catalytic core - and CF(0) - the membrane proton channel. CF(1) has five subunits: alpha(3), beta(3), gamma(1), delta(1), epsilon(1). CF(0) has three main subunits: a, b and c.

Its subcellular location is the cell inner membrane. In terms of biological role, produces ATP from ADP in the presence of a proton gradient across the membrane. The protein is ATP synthase epsilon chain of Rhodopseudomonas palustris (strain BisA53).